A 371-amino-acid chain; its full sequence is Flagellar P-ring protein 1 (371 aa).

An N-terminal signal peptide occupies residues 1–19; the sequence is MRRALLLAALLACAPPAFA.

It belongs to the FlgI family. As to quaternary structure, the basal body constitutes a major portion of the flagellar organelle and consists of four rings (L,P,S, and M) mounted on a central rod.

It is found in the periplasm. The protein localises to the bacterial flagellum basal body. In terms of biological role, assembles around the rod to form the L-ring and probably protects the motor/basal body from shearing forces during rotation. The sequence is that of Flagellar P-ring protein 1 from Cereibacter sphaeroides (strain ATCC 17023 / DSM 158 / JCM 6121 / CCUG 31486 / LMG 2827 / NBRC 12203 / NCIMB 8253 / ATH 2.4.1.) (Rhodobacter sphaeroides).